Reading from the N-terminus, the 155-residue chain is Ribosomal RNA large subunit methyltransferase H (155 aa).

Gly-103 is a binding site for S-adenosyl-L-methionine.

It belongs to the RNA methyltransferase RlmH family. In terms of assembly, homodimer.

The protein localises to the cytoplasm. It catalyses the reaction pseudouridine(1915) in 23S rRNA + S-adenosyl-L-methionine = N(3)-methylpseudouridine(1915) in 23S rRNA + S-adenosyl-L-homocysteine + H(+). In terms of biological role, specifically methylates the pseudouridine at position 1915 (m3Psi1915) in 23S rRNA. The chain is Ribosomal RNA large subunit methyltransferase H from Caulobacter vibrioides (strain ATCC 19089 / CIP 103742 / CB 15) (Caulobacter crescentus).